Here is a 337-residue protein sequence, read N- to C-terminus: Glyceraldehyde-3-phosphate dehydrogenase (337 aa).

NAD(+)-binding positions include 12–13 (RI), Asp34, and Lys79. D-glyceraldehyde 3-phosphate-binding positions include 150–152 (SCT), Thr181, 210–211 (TG), and Arg233. The Nucleophile role is filled by Cys151. Asn315 contributes to the NAD(+) binding site.

The protein belongs to the glyceraldehyde-3-phosphate dehydrogenase family. As to quaternary structure, homotetramer. In terms of tissue distribution, expressed in all tissues examined.

It localises to the cytoplasm. It carries out the reaction D-glyceraldehyde 3-phosphate + phosphate + NAD(+) = (2R)-3-phospho-glyceroyl phosphate + NADH + H(+). Its pathway is carbohydrate degradation; glycolysis; pyruvate from D-glyceraldehyde 3-phosphate: step 1/5. The sequence is that of Glyceraldehyde-3-phosphate dehydrogenase (gpd) from Lentinula edodes (Shiitake mushroom).